The following is a 320-amino-acid chain: Olfactory receptor 7C1 (320 aa).

The Extracellular segment spans residues 1 to 25 (METGNQTHAQEFLLLGFSATSEIQF). Residue Asn-5 is glycosylated (N-linked (GlcNAc...) asparagine). The chain crosses the membrane as a helical span at residues 26–46 (ILFGLFLSMYLVTFTGNLLII). The Cytoplasmic segment spans residues 47-54 (LAICSDSH). The chain crosses the membrane as a helical span at residues 55 to 75 (LHTPMYFFLSNLSFADLCFTS). The Extracellular portion of the chain corresponds to 76 to 99 (TTVPKMLLNILTQNKFITYAGCLS). Residues Cys-97 and Cys-189 are joined by a disulfide bond. A helical transmembrane segment spans residues 100 to 120 (QIFFFTSFGCLDNLLLTVMAY). Over 121-139 (DRFVAVCHPLHYTVIMNPQ) the chain is Cytoplasmic. Residues 140 to 160 (LCGLLVLGSWCISVMGSLLET) traverse the membrane as a helical segment. The Extracellular segment spans residues 161-197 (LTVLRLSFCTEMEIPHFFCDLLEVLKLACSDTFINNV). Residues 198–217 (VIYFATGVLGVISFTGIFFS) form a helical membrane-spanning segment. The Cytoplasmic segment spans residues 218–237 (YYKIVFSILRISSAGRKHKA). Residues 238 to 258 (FSTCGSHLSVVTLFYGTGFGV) traverse the membrane as a helical segment. Over 259–271 (YLSSAATPSSRTS) the chain is Extracellular. The helical transmembrane segment at 272 to 292 (LVASVMYTMVTPMLNPFIYSL) threads the bilayer. Residues 293 to 313 (RNTDMKRALGRLLSRATFFNG) lie on the Cytoplasmic side of the membrane.

It belongs to the G-protein coupled receptor 1 family.

The protein localises to the cell membrane. Functionally, odorant receptor. In Homo sapiens (Human), this protein is Olfactory receptor 7C1 (OR7C1).